A 285-amino-acid polypeptide reads, in one-letter code: tRNA pseudouridine synthase A (285 aa).

Catalysis depends on D64, which acts as the Nucleophile. Position 125 (Y125) interacts with substrate.

It belongs to the tRNA pseudouridine synthase TruA family. As to quaternary structure, homodimer.

The enzyme catalyses uridine(38/39/40) in tRNA = pseudouridine(38/39/40) in tRNA. Formation of pseudouridine at positions 38, 39 and 40 in the anticodon stem and loop of transfer RNAs. This chain is tRNA pseudouridine synthase A, found in Streptomyces avermitilis (strain ATCC 31267 / DSM 46492 / JCM 5070 / NBRC 14893 / NCIMB 12804 / NRRL 8165 / MA-4680).